The following is a 553-amino-acid chain: Meiotic expression up-regulated protein 18 (553 aa).

The segment at S267–K305 is disordered. Basic and acidic residues predominate over residues D275–T289. Over residues I293–H304 the composition is skewed to basic residues.

This Schizosaccharomyces pombe (strain 972 / ATCC 24843) (Fission yeast) protein is Meiotic expression up-regulated protein 18 (meu18).